A 209-amino-acid chain; its full sequence is MGKCQVISHPLIQHKLSILRREDTSTKNFRELVNEIAMLMGYEVSRDLPLEDVEIQTPVAKTIQKQLTGKKLAIVPILRAGIGMVDGFLSLVPAAKVGHIGMYRDEETLEPVEYLVKLPEDIDQRQIFVVDPMLATGGSAILAVDSLKKRGAGNIKFVCLVAAPEGVKKLQEAHPDVDIYTAALDEKLNEHGYIVPGLGDAGDRLFGTK.

Residues Arg-79, Arg-104, and 131–139 (DPMLATGGS) each bind 5-phospho-alpha-D-ribose 1-diphosphate. Residues Ile-194 and 199–201 (GDA) each bind uracil. Asp-200 is a binding site for 5-phospho-alpha-D-ribose 1-diphosphate.

Belongs to the UPRTase family. Mg(2+) serves as cofactor.

It carries out the reaction UMP + diphosphate = 5-phospho-alpha-D-ribose 1-diphosphate + uracil. It functions in the pathway pyrimidine metabolism; UMP biosynthesis via salvage pathway; UMP from uracil: step 1/1. With respect to regulation, allosterically activated by GTP. In terms of biological role, catalyzes the conversion of uracil and 5-phospho-alpha-D-ribose 1-diphosphate (PRPP) to UMP and diphosphate. The polypeptide is Uracil phosphoribosyltransferase (Streptococcus uberis (strain ATCC BAA-854 / 0140J)).